Consider the following 277-residue polypeptide: Phosphatidylserine decarboxylase proenzyme (277 aa).

Residues Asp-88, His-144, and Ser-242 each act as charge relay system; for autoendoproteolytic cleavage activity in the active site. The Schiff-base intermediate with substrate; via pyruvic acid; for decarboxylase activity role is filled by Ser-242. Ser-242 is subject to Pyruvic acid (Ser); by autocatalysis.

This sequence belongs to the phosphatidylserine decarboxylase family. PSD-B subfamily. Prokaryotic type I sub-subfamily. Heterodimer of a large membrane-associated beta subunit and a small pyruvoyl-containing alpha subunit. Pyruvate is required as a cofactor. Post-translationally, is synthesized initially as an inactive proenzyme. Formation of the active enzyme involves a self-maturation process in which the active site pyruvoyl group is generated from an internal serine residue via an autocatalytic post-translational modification. Two non-identical subunits are generated from the proenzyme in this reaction, and the pyruvate is formed at the N-terminus of the alpha chain, which is derived from the carboxyl end of the proenzyme. The autoendoproteolytic cleavage occurs by a canonical serine protease mechanism, in which the side chain hydroxyl group of the serine supplies its oxygen atom to form the C-terminus of the beta chain, while the remainder of the serine residue undergoes an oxidative deamination to produce ammonia and the pyruvoyl prosthetic group on the alpha chain. During this reaction, the Ser that is part of the protease active site of the proenzyme becomes the pyruvoyl prosthetic group, which constitutes an essential element of the active site of the mature decarboxylase.

Its subcellular location is the cell membrane. It carries out the reaction a 1,2-diacyl-sn-glycero-3-phospho-L-serine + H(+) = a 1,2-diacyl-sn-glycero-3-phosphoethanolamine + CO2. It participates in phospholipid metabolism; phosphatidylethanolamine biosynthesis; phosphatidylethanolamine from CDP-diacylglycerol: step 2/2. In terms of biological role, catalyzes the formation of phosphatidylethanolamine (PtdEtn) from phosphatidylserine (PtdSer). The sequence is that of Phosphatidylserine decarboxylase proenzyme from Psychrobacter arcticus (strain DSM 17307 / VKM B-2377 / 273-4).